Reading from the N-terminus, the 668-residue chain is tRNA 5-methylaminomethyl-2-thiouridine biosynthesis bifunctional protein MnmC (668 aa).

Positions 1 to 245 (MKHYSIQPAN…KREMLCGVME (245 aa)) are tRNA (mnm(5)s(2)U34)-methyltransferase. The tract at residues 270–668 (IGGGIASALL…LLKGKAVKAG (399 aa)) is FAD-dependent cmnm(5)s(2)U34 oxidoreductase.

The protein in the N-terminal section; belongs to the methyltransferase superfamily. tRNA (mnm(5)s(2)U34)-methyltransferase family. This sequence in the C-terminal section; belongs to the DAO family. Requires FAD as cofactor.

It localises to the cytoplasm. The catalysed reaction is 5-aminomethyl-2-thiouridine(34) in tRNA + S-adenosyl-L-methionine = 5-methylaminomethyl-2-thiouridine(34) in tRNA + S-adenosyl-L-homocysteine + H(+). Catalyzes the last two steps in the biosynthesis of 5-methylaminomethyl-2-thiouridine (mnm(5)s(2)U) at the wobble position (U34) in tRNA. Catalyzes the FAD-dependent demodification of cmnm(5)s(2)U34 to nm(5)s(2)U34, followed by the transfer of a methyl group from S-adenosyl-L-methionine to nm(5)s(2)U34, to form mnm(5)s(2)U34. The chain is tRNA 5-methylaminomethyl-2-thiouridine biosynthesis bifunctional protein MnmC from Escherichia coli (strain K12 / DH10B).